Consider the following 561-residue polypeptide: Dihydroxy-acid dehydratase (561 aa).

Cys-50 provides a ligand contact to [2Fe-2S] cluster. Asp-82 is a binding site for Mg(2+). Cys-123 is a [2Fe-2S] cluster binding site. Mg(2+) contacts are provided by Asp-124 and Lys-125. Lys-125 bears the N6-carboxylysine mark. Cys-195 is a [2Fe-2S] cluster binding site. Glu-447 lines the Mg(2+) pocket. The active-site Proton acceptor is Ser-473.

Belongs to the IlvD/Edd family. As to quaternary structure, homodimer. Requires [2Fe-2S] cluster as cofactor. Mg(2+) is required as a cofactor.

The enzyme catalyses (2R)-2,3-dihydroxy-3-methylbutanoate = 3-methyl-2-oxobutanoate + H2O. The catalysed reaction is (2R,3R)-2,3-dihydroxy-3-methylpentanoate = (S)-3-methyl-2-oxopentanoate + H2O. Its pathway is amino-acid biosynthesis; L-isoleucine biosynthesis; L-isoleucine from 2-oxobutanoate: step 3/4. It functions in the pathway amino-acid biosynthesis; L-valine biosynthesis; L-valine from pyruvate: step 3/4. Its function is as follows. Functions in the biosynthesis of branched-chain amino acids. Catalyzes the dehydration of (2R,3R)-2,3-dihydroxy-3-methylpentanoate (2,3-dihydroxy-3-methylvalerate) into 2-oxo-3-methylpentanoate (2-oxo-3-methylvalerate) and of (2R)-2,3-dihydroxy-3-methylbutanoate (2,3-dihydroxyisovalerate) into 2-oxo-3-methylbutanoate (2-oxoisovalerate), the penultimate precursor to L-isoleucine and L-valine, respectively. This is Dihydroxy-acid dehydratase from Microcystis aeruginosa (strain NIES-843 / IAM M-2473).